Reading from the N-terminus, the 215-residue chain is Riboflavin synthase (215 aa).

2 Lumazine-binding repeats span residues 1–96 (MFTG…FGGH) and 97–193 (FVSG…YRFL). 2,4-dihydroxypteridine contacts are provided by residues 4 to 6 (GII), 47 to 49 (CLT), 61 to 66 (DVMPET), 100 to 102 (GHV), Lys135, 144 to 146 (SLT), and 158 to 163 (SLIPHT).

As to quaternary structure, homotrimer. Can interact with 6,7-dimethyl-8-ribityllumazine synthase, forming a lumazine synthase/riboflavin synthase complex, also designated as 'heavy riboflavin synthase complex', which consists of a trimer of riboflavin synthase enclosed within an icosahedral structure composed of 60 subunits of 6,7-dimethyl-8-ribityllumazine synthase.

It carries out the reaction 2 6,7-dimethyl-8-(1-D-ribityl)lumazine + H(+) = 5-amino-6-(D-ribitylamino)uracil + riboflavin. Its pathway is cofactor biosynthesis; riboflavin biosynthesis; riboflavin from 2-hydroxy-3-oxobutyl phosphate and 5-amino-6-(D-ribitylamino)uracil: step 2/2. With respect to regulation, is activated by sulfite ions. Catalyzes the dismutation of two molecules of 6,7-dimethyl-8-ribityllumazine, resulting in the formation of riboflavin and 5-amino-6-(D-ribitylamino)uracil. The sequence is that of Riboflavin synthase (ribE) from Bacillus subtilis (strain 168).